A 120-amino-acid polypeptide reads, in one-letter code: Acylphosphatase-1 (120 aa).

The residue at position 2 (Ala-2) is an N-acetylalanine. Residues 8 to 98 (SCEFEVFGRV…YGYANFHIKP (91 aa)) form the Acylphosphatase-like domain. Residues Arg-23 and Asn-41 contribute to the active site. The tract at residues 91-120 (YANFHIKPDPHENRPVHEGLGSSSSHHDSN) is disordered. Residues 96–107 (IKPDPHENRPVH) show a composition bias toward basic and acidic residues.

Belongs to the acylphosphatase family.

The protein resides in the cytoplasm. It catalyses the reaction an acyl phosphate + H2O = a carboxylate + phosphate + H(+). This is Acylphosphatase-1 (Acyp) from Drosophila melanogaster (Fruit fly).